Reading from the N-terminus, the 835-residue chain is Adhesion G protein-coupled receptor E5 (835 aa).

The signal sequence occupies residues 1 to 20 (MGGRVFLAFCVWLTLPGAET). The Extracellular segment spans residues 21–552 (QDSRGCARWC…EDWKLTLITR (532 aa)). The region spanning 22-63 (DSRGCARWCPQNSSCVNATACRCNPGFSSFSEIITTPTETCD) is the EGF-like 1 domain. 15 cysteine pairs are disulfide-bonded: Cys26–Cys36, Cys30–Cys42, Cys44–Cys62, Cys68–Cys82, Cys76–Cys91, Cys93–Cys114, Cys120–Cys133, Cys127–Cys142, Cys144–Cys158, Cys164–Cys177, Cys171–Cys186, Cys188–Cys207, Cys213–Cys226, Cys220–Cys235, and Cys237–Cys256. Asn33 and Asn38 each carry an N-linked (GlcNAc...) asparagine glycan. Residues 64–115 (DINECATPSKVSCGKFSDCWNTEGSYDCVCSPGYEPVSGAKTFKNESENTCQ) form the EGF-like 2; calcium-binding domain. Residue Asn108 is glycosylated (N-linked (GlcNAc...) asparagine). Residues 116–159 (DVDECQQNPRLCKSYGTCVNTLGSYTCQCLPGFKFIPEDPKVCT) enclose the EGF-like 3; calcium-binding domain. The 49-residue stretch at 160–208 (DVNECTSGQNPCHSSTHCLNNVGSYQCRCRPGWQPIPGSPNGPNNTVCE) folds into the EGF-like 4; calcium-binding domain. Residue Asn203 is glycosylated (N-linked (GlcNAc...) asparagine). The 49-residue stretch at 209–257 (DVDECSSGQHQCDSSTVCFNTVGSYSCRCRPGWKPRHGIPNNQKDTVCE) folds into the EGF-like 5; calcium-binding domain. Residues 349–543 (PFTYISPSNT…AILMAHYDVE (195 aa)) enclose the GAIN-B domain. Asn371, Asn406, Asn413, Asn453, and Asn520 each carry an N-linked (GlcNAc...) asparagine glycan. 2 disulfide bridges follow: Cys495–Cys525 and Cys513–Cys527. The segment at 495–543 (CAFWKSDSDRGGHWATEGCQVLGSKNGSTTCQCSHLSSFAILMAHYDVE) is GPS. The chain crosses the membrane as a helical span at residues 553-572 (VGLALSLFCLLLCILTFLLV). At 573 to 581 (RPIQGSRTT) the chain is on the cytoplasmic side. The helical transmembrane segment at 582-601 (IHLHLCICLFVGSTIFLAGI) threads the bilayer. The Extracellular portion of the chain corresponds to 602–620 (ENEGGQVGLRCRLVAGLLH). A helical membrane pass occupies residues 621–642 (YCFLAAFCWMSLEGLELYFLVV). The Cytoplasmic portion of the chain corresponds to 643-653 (RVFQGQGLSTR). A helical transmembrane segment spans residues 654-674 (WLCLIGYGVPLLIVGVSAAIY). Over 675–691 (SKGYGRPRYCWLDFEQG) the chain is Extracellular. Residues 692–712 (FLWSFLGPVTFIILCNAVIFV) form a helical membrane-spanning segment. Residues 713 to 739 (TTVWKLTQKFSEINPDMKKLKKARALT) lie on the Cytoplasmic side of the membrane. The helical transmembrane segment at 740-760 (ITAIAQLFLLGCTWVFGLFIF) threads the bilayer. Topologically, residues 761-766 (DDRSLV) are extracellular. Residues 767–789 (LTYVFTILNCLQGAFLYLLHCLL) traverse the membrane as a helical segment. Residues 790–835 (NKKVREEYRKWACLVAGGSKYSEFTSTTSGTGHNQTRALRASESGI) are Cytoplasmic-facing. Residues 814-826 (TSTTSGTGHNQTR) show a composition bias toward polar residues. A disordered region spans residues 814 to 835 (TSTTSGTGHNQTRALRASESGI). Phosphoserine is present on Ser815. The residue at position 816 (Thr816) is a Phosphothreonine. Ser818 is subject to Phosphoserine. Thr825 is modified (phosphothreonine). 2 positions are modified to phosphoserine: Ser831 and Ser833.

This sequence belongs to the G-protein coupled receptor 2 family. LN-TM7 subfamily. In terms of assembly, forms a heterodimer, consisting of a large extracellular region (alpha subunit) non-covalently linked to a seven-transmembrane moiety (beta subunit). Interacts with complement decay-accelerating factor (DAF). The largest isoform (isoform 1) interacts with chondroitin sulfate. Post-translationally, proteolytically cleaved into 2 subunits, an extracellular alpha subunit and a seven-transmembrane subunit. In terms of tissue distribution, broadly expressed, found on most hematopoietic cells, including activated lymphocytes, monocytes, macrophages, dendritic cells, and granulocytes. Expressed also abundantly by smooth muscle cells. Expressed in thyroid, colorectal, gastric, esophageal and pancreatic carcinomas too. Expression are increased under inflammatory conditions in the CNS of multiple sclerosis and in synovial tissue of patients with rheumatoid arthritis. Increased expression of CD97 in the synovium is accompanied by detectable levels of soluble CD97 in the synovial fluid.

It is found in the cell membrane. It localises to the secreted. The protein localises to the extracellular space. In terms of biological role, receptor potentially involved in both adhesion and signaling processes early after leukocyte activation. Plays an essential role in leukocyte migration. The protein is Adhesion G protein-coupled receptor E5 of Homo sapiens (Human).